The following is a 124-amino-acid chain: Small ribosomal subunit protein uS11 (124 aa).

This sequence belongs to the universal ribosomal protein uS11 family. In terms of assembly, part of the 30S ribosomal subunit. Interacts with proteins S7 and S18. Binds to IF-3.

In terms of biological role, located on the platform of the 30S subunit, it bridges several disparate RNA helices of the 16S rRNA. Forms part of the Shine-Dalgarno cleft in the 70S ribosome. This chain is Small ribosomal subunit protein uS11, found in Sulfurovum sp. (strain NBC37-1).